The following is a 217-amino-acid chain: uncharacterized protein (217 aa).

Disordered regions lie at residues 1 to 85 and 167 to 189; these read MGVK…RGNT and KLRS…EPDE. A compositionally biased stretch (basic and acidic residues) spans 38–48; sequence AKSDKDKRKGS. The span at 60–78 shows a compositional bias: low complexity; it reads NALPTKNLTTPPALNPLTT. A compositionally biased stretch (basic and acidic residues) spans 172 to 189; it reads PHKDQHNSATNKDQEPDE.

This is an uncharacterized protein from Saccharomyces cerevisiae (strain ATCC 204508 / S288c) (Baker's yeast).